The primary structure comprises 342 residues: Holliday junction branch migration complex subunit RuvB (342 aa).

The large ATPase domain (RuvB-L) stretch occupies residues 4–182 (TDRLLSAGRR…FGIPIRLQFY (179 aa)). Leucine 21, arginine 22, glycine 63, lysine 66, threonine 67, threonine 68, arginine 172, tyrosine 182, and arginine 219 together coordinate ATP. Threonine 67 is a binding site for Mg(2+). The interval 183–253 (TVEELERVVS…VADQSLNRLE (71 aa)) is small ATPAse domain (RuvB-S). Residues 256–342 (NLGLDAMDRR…EAGQDGLFDV (87 aa)) form a head domain (RuvB-H) region. Residues arginine 292, arginine 311, and arginine 316 each coordinate DNA.

Belongs to the RuvB family. As to quaternary structure, homohexamer. Forms an RuvA(8)-RuvB(12)-Holliday junction (HJ) complex. HJ DNA is sandwiched between 2 RuvA tetramers; dsDNA enters through RuvA and exits via RuvB. An RuvB hexamer assembles on each DNA strand where it exits the tetramer. Each RuvB hexamer is contacted by two RuvA subunits (via domain III) on 2 adjacent RuvB subunits; this complex drives branch migration. In the full resolvosome a probable DNA-RuvA(4)-RuvB(12)-RuvC(2) complex forms which resolves the HJ.

It localises to the cytoplasm. The catalysed reaction is ATP + H2O = ADP + phosphate + H(+). Its function is as follows. The RuvA-RuvB-RuvC complex processes Holliday junction (HJ) DNA during genetic recombination and DNA repair, while the RuvA-RuvB complex plays an important role in the rescue of blocked DNA replication forks via replication fork reversal (RFR). RuvA specifically binds to HJ cruciform DNA, conferring on it an open structure. The RuvB hexamer acts as an ATP-dependent pump, pulling dsDNA into and through the RuvAB complex. RuvB forms 2 homohexamers on either side of HJ DNA bound by 1 or 2 RuvA tetramers; 4 subunits per hexamer contact DNA at a time. Coordinated motions by a converter formed by DNA-disengaged RuvB subunits stimulates ATP hydrolysis and nucleotide exchange. Immobilization of the converter enables RuvB to convert the ATP-contained energy into a lever motion, pulling 2 nucleotides of DNA out of the RuvA tetramer per ATP hydrolyzed, thus driving DNA branch migration. The RuvB motors rotate together with the DNA substrate, which together with the progressing nucleotide cycle form the mechanistic basis for DNA recombination by continuous HJ branch migration. Branch migration allows RuvC to scan DNA until it finds its consensus sequence, where it cleaves and resolves cruciform DNA. This is Holliday junction branch migration complex subunit RuvB from Rhizorhabdus wittichii (strain DSM 6014 / CCUG 31198 / JCM 15750 / NBRC 105917 / EY 4224 / RW1) (Sphingomonas wittichii).